The following is a 471-amino-acid chain: Putative ETHYLENE INSENSITIVE 3-like 4 protein (471 aa).

The tract at residues 280–316 is disordered; the sequence is DLKISEDQDDQESSGSKRKSESMEPSKSVYTCQNSSC. Residues 304 to 316 are compositionally biased toward polar residues; sequence PSKSVYTCQNSSC.

Belongs to the EIN3 family.

Its subcellular location is the nucleus. Its function is as follows. Putative transcription factor that may be involved in the ethylene response pathway. The protein is Putative ETHYLENE INSENSITIVE 3-like 4 protein (EIL4) of Arabidopsis thaliana (Mouse-ear cress).